Reading from the N-terminus, the 510-residue chain is Ribose import ATP-binding protein RbsA 1 (510 aa).

2 ABC transporter domains span residues Leu-20–Asp-256 and Val-266–Ala-510. Position 52–59 (Gly-52–Ser-59) interacts with ATP.

It belongs to the ABC transporter superfamily. Ribose importer (TC 3.A.1.2.1) family. As to quaternary structure, the complex is composed of an ATP-binding protein (RbsA), two transmembrane proteins (RbsC) and a solute-binding protein (RbsB).

Its subcellular location is the cell inner membrane. The catalysed reaction is D-ribose(out) + ATP + H2O = D-ribose(in) + ADP + phosphate + H(+). In terms of biological role, part of the ABC transporter complex RbsABC involved in ribose import. Responsible for energy coupling to the transport system. In Agrobacterium fabrum (strain C58 / ATCC 33970) (Agrobacterium tumefaciens (strain C58)), this protein is Ribose import ATP-binding protein RbsA 1.